A 263-amino-acid polypeptide reads, in one-letter code: Hydroxyethylthiazole kinase 1 (263 aa).

Position 42 (M42) interacts with substrate. 2 residues coordinate ATP: K118 and T164. Substrate is bound at residue G191.

This sequence belongs to the Thz kinase family. Requires Mg(2+) as cofactor.

The enzyme catalyses 5-(2-hydroxyethyl)-4-methylthiazole + ATP = 4-methyl-5-(2-phosphooxyethyl)-thiazole + ADP + H(+). It functions in the pathway cofactor biosynthesis; thiamine diphosphate biosynthesis; 4-methyl-5-(2-phosphoethyl)-thiazole from 5-(2-hydroxyethyl)-4-methylthiazole: step 1/1. Its function is as follows. Catalyzes the phosphorylation of the hydroxyl group of 4-methyl-5-beta-hydroxyethylthiazole (THZ). This is Hydroxyethylthiazole kinase 1 from Clostridium botulinum (strain 657 / Type Ba4).